Here is a 139-residue protein sequence, read N- to C-terminus: MTFKRRRIREVAFQTLFAMVSDPEVDREQLYKELLPLAPQEEVPAYLEELVTGVSEHQAEFDQEIEGSLAAGWSLSRVEKPNLIILRLALYEMKYVDDVPVAVAIDEALEMTKKFSDDKSRKFINGVLGHIGGPKTTSN.

Belongs to the NusB family.

Involved in transcription antitermination. Required for transcription of ribosomal RNA (rRNA) genes. Binds specifically to the boxA antiterminator sequence of the ribosomal RNA (rrn) operons. The sequence is that of Transcription antitermination protein NusB from Limosilactobacillus fermentum (strain NBRC 3956 / LMG 18251) (Lactobacillus fermentum).